A 599-amino-acid polypeptide reads, in one-letter code: Elongation factor 4 (599 aa).

The region spanning 2 to 184 (KNIRNFSIIA…RLVRDIPPPQ (183 aa)) is the tr-type G domain. Residues 14-19 (DHGKST) and 131-134 (NKID) contribute to the GTP site.

Belongs to the TRAFAC class translation factor GTPase superfamily. Classic translation factor GTPase family. LepA subfamily.

It localises to the cell inner membrane. It catalyses the reaction GTP + H2O = GDP + phosphate + H(+). In terms of biological role, required for accurate and efficient protein synthesis under certain stress conditions. May act as a fidelity factor of the translation reaction, by catalyzing a one-codon backward translocation of tRNAs on improperly translocated ribosomes. Back-translocation proceeds from a post-translocation (POST) complex to a pre-translocation (PRE) complex, thus giving elongation factor G a second chance to translocate the tRNAs correctly. Binds to ribosomes in a GTP-dependent manner. This chain is Elongation factor 4, found in Salmonella paratyphi C (strain RKS4594).